A 217-amino-acid polypeptide reads, in one-letter code: Small ribosomal subunit protein uS2 (217 aa).

This sequence belongs to the universal ribosomal protein uS2 family.

The polypeptide is Small ribosomal subunit protein uS2 (Korarchaeum cryptofilum (strain OPF8)).